Here is a 120-residue protein sequence, read N- to C-terminus: UPF0091 protein PH1455 (120 aa).

This sequence belongs to the UPF0091 family.

The sequence is that of UPF0091 protein PH1455 from Pyrococcus horikoshii (strain ATCC 700860 / DSM 12428 / JCM 9974 / NBRC 100139 / OT-3).